A 115-amino-acid polypeptide reads, in one-letter code: WLMIVEQKCRVIVMLAKCFEAGKKKCQKYWPDSKETKTFGRVKVFNVEEVKYCGFLRRRFHIESVDEVITMEVFQYQYINWPDHSVPNTTSNLVRMHKYVIQCLEETGGDAPMVV.

In terms of domain architecture, Tyrosine-protein phosphatase spans W1–V115. Residue D83 coordinates substrate.

The protein belongs to the protein-tyrosine phosphatase family.

The enzyme catalyses O-phospho-L-tyrosyl-[protein] + H2O = L-tyrosyl-[protein] + phosphate. This Styela plicata (Wrinkled sea squirt) protein is Tyrosine-protein phosphatase 22 (STY-22).